Reading from the N-terminus, the 66-residue chain is UPF0150 protein AF_0072.1 (66 aa).

This sequence belongs to the UPF0150 family.

The polypeptide is UPF0150 protein AF_0072.1 (Archaeoglobus fulgidus (strain ATCC 49558 / DSM 4304 / JCM 9628 / NBRC 100126 / VC-16)).